A 467-amino-acid polypeptide reads, in one-letter code: Ribosome biogenesis protein YTM1 (467 aa).

Residues 8–95 (IKIKFFTNEE…ETFLSLEYTR (88 aa)) are ubiquitin-like (UBL) domain. Residues 105–467 (SFNNEDWISS…QINKGSDISK (363 aa)) are sufficient for interaction with ERB1 and association with 66S pre-ribosomes. WD repeat units follow at residues 120–159 (KTLP…EKQY), 161–199 (GHSG…GSIP), 216–255 (GHKA…MTTI), 293–333 (SHTQ…CIDT), 335–374 (STGY…NTTE), 382–422 (GHTN…SLYT), and 432–467 (KGAD…DISK).

It belongs to the WD repeat WDR12/YTM1 family. Component of the NOP7 complex, composed of ERB1, NOP7 and YTM1. The complex is held together by ERB1, which interacts with NOP7 via its N-terminal domain and with YTM1 via a high-affinity interaction between the seven-bladed beta-propeller domains of the 2 proteins. The NOP7 complex associates with the 66S pre-ribosome. Interacts (via UBL domain) with MDN1 (via VWFA/MIDAS domain).

Its subcellular location is the nucleus. The protein resides in the nucleolus. The protein localises to the nucleoplasm. Its function is as follows. Component of the NOP7 complex, which is required for maturation of the 25S and 5.8S ribosomal RNAs and formation of the 60S ribosome. This is Ribosome biogenesis protein YTM1 from Scheffersomyces stipitis (strain ATCC 58785 / CBS 6054 / NBRC 10063 / NRRL Y-11545) (Yeast).